Here is a 321-residue protein sequence, read N- to C-terminus: MAASKRLVVSCLFLVLLFAQANSQGLKVGFYSKTCPQLEGIVKKVVFDAMNKAPTLGAPLLRMFFHDCFVRGCDGSVLLDKPNNQGEKSAVPNLSLRGFGIIDDSKAALEKVCPGIVSCSDILALVARDAMVALEGPSWEVETGRRDGRVSNINEVNLPSPFDNITKLISDFRSKGLNEKDLVILSGGHTIGMGHCPLLTNRLYNFTGKGDSDPSLDSEYAAKLRKKCKPTDTTTALEMDPGSFKTFDLSYFTLVAKRRGLFQSDAALLDNSKTRAYVLQQIRTHGSMFFNDFGVSMVKMGRTGVLTGKAGEIRKTCRSAN.

Positions 1–23 (MAASKRLVVSCLFLVLLFAQANS) are cleaved as a signal peptide. 4 cysteine pairs are disulfide-bonded: Cys35–Cys113, Cys68–Cys73, Cys119–Cys317, and Cys196–Cys228. His66 functions as the Proton acceptor in the catalytic mechanism. Ca(2+) is bound by residues Asp67, Val70, Gly72, Asp74, and Ser76. Pro159 provides a ligand contact to substrate. A glycan (N-linked (GlcNAc...) asparagine) is linked at Asn164. His189 lines the heme b pocket. Thr190 provides a ligand contact to Ca(2+). Asn205 is a glycosylation site (N-linked (GlcNAc...) asparagine). Residues Asp240, Ser243, and Asp248 each coordinate Ca(2+).

Belongs to the peroxidase family. Classical plant (class III) peroxidase subfamily. The cofactor is heme b. Ca(2+) serves as cofactor. Expressed in the whole plant, but preferentially in roots and flowers.

The protein resides in the secreted. It carries out the reaction 2 a phenolic donor + H2O2 = 2 a phenolic radical donor + 2 H2O. Its function is as follows. Removal of H(2)O(2), oxidation of toxic reductants, biosynthesis and degradation of lignin, suberization, auxin catabolism, response to environmental stresses such as wounding, pathogen attack and oxidative stress. These functions might be dependent on each isozyme/isoform in each plant tissue. This Arabidopsis thaliana (Mouse-ear cress) protein is Peroxidase 27 (PER27).